A 347-amino-acid polypeptide reads, in one-letter code: tRNA N6-adenosine threonylcarbamoyltransferase (347 aa).

Residues His113 and His117 each coordinate Fe cation. Substrate contacts are provided by residues 136 to 140, Asp170, Gly183, Asp187, and Asn282; that span reads IVSGG. Asp310 contributes to the Fe cation binding site.

The protein belongs to the KAE1 / TsaD family. The cofactor is Fe(2+).

Its subcellular location is the cytoplasm. It catalyses the reaction L-threonylcarbamoyladenylate + adenosine(37) in tRNA = N(6)-L-threonylcarbamoyladenosine(37) in tRNA + AMP + H(+). Functionally, required for the formation of a threonylcarbamoyl group on adenosine at position 37 (t(6)A37) in tRNAs that read codons beginning with adenine. Is involved in the transfer of the threonylcarbamoyl moiety of threonylcarbamoyl-AMP (TC-AMP) to the N6 group of A37, together with TsaE and TsaB. TsaD likely plays a direct catalytic role in this reaction. In Bifidobacterium adolescentis (strain ATCC 15703 / DSM 20083 / NCTC 11814 / E194a), this protein is tRNA N6-adenosine threonylcarbamoyltransferase.